Reading from the N-terminus, the 92-residue chain is Small ribosomal subunit protein uS19 (92 aa).

It belongs to the universal ribosomal protein uS19 family.

In terms of biological role, protein S19 forms a complex with S13 that binds strongly to the 16S ribosomal RNA. The polypeptide is Small ribosomal subunit protein uS19 (Baumannia cicadellinicola subsp. Homalodisca coagulata).